Reading from the N-terminus, the 256-residue chain is Imidazole glycerol phosphate synthase subunit HisF (256 aa).

Residues aspartate 11 and aspartate 130 contribute to the active site.

This sequence belongs to the HisA/HisF family. Heterodimer of HisH and HisF.

It is found in the cytoplasm. It carries out the reaction 5-[(5-phospho-1-deoxy-D-ribulos-1-ylimino)methylamino]-1-(5-phospho-beta-D-ribosyl)imidazole-4-carboxamide + L-glutamine = D-erythro-1-(imidazol-4-yl)glycerol 3-phosphate + 5-amino-1-(5-phospho-beta-D-ribosyl)imidazole-4-carboxamide + L-glutamate + H(+). The protein operates within amino-acid biosynthesis; L-histidine biosynthesis; L-histidine from 5-phospho-alpha-D-ribose 1-diphosphate: step 5/9. IGPS catalyzes the conversion of PRFAR and glutamine to IGP, AICAR and glutamate. The HisF subunit catalyzes the cyclization activity that produces IGP and AICAR from PRFAR using the ammonia provided by the HisH subunit. This Prochlorococcus marinus (strain NATL1A) protein is Imidazole glycerol phosphate synthase subunit HisF.